The sequence spans 388 residues: Putative 8-amino-7-oxononanoate synthase (388 aa).

Arg-22 contacts substrate. 109 to 110 serves as a coordination point for pyridoxal 5'-phosphate; it reads GY. His-134 serves as a coordination point for substrate. Residues Ser-182, 207-210, and 237-240 contribute to the pyridoxal 5'-phosphate site; these read DEAH and TLSK. At Lys-240 the chain carries N6-(pyridoxal phosphate)lysine. Thr-354 is a substrate binding site.

The protein belongs to the class-II pyridoxal-phosphate-dependent aminotransferase family. BioF subfamily. In terms of assembly, homodimer. Requires pyridoxal 5'-phosphate as cofactor.

It catalyses the reaction 6-carboxyhexanoyl-[ACP] + L-alanine + H(+) = (8S)-8-amino-7-oxononanoate + holo-[ACP] + CO2. Its pathway is cofactor biosynthesis; biotin biosynthesis. Functionally, catalyzes the decarboxylative condensation of pimeloyl-[acyl-carrier protein] and L-alanine to produce 8-amino-7-oxononanoate (AON), [acyl-carrier protein], and carbon dioxide. The chain is Putative 8-amino-7-oxononanoate synthase (bioF) from Gloeobacter violaceus (strain ATCC 29082 / PCC 7421).